Here is a 225-residue protein sequence, read N- to C-terminus: UPF0758 protein XC_3944 (225 aa).

The MPN domain maps to 102–224 (ALSDPSSVGR…PVSLAERGWV (123 aa)). Residues His173, His175, and Asp186 each coordinate Zn(2+). The JAMM motif signature appears at 173-186 (HNHPSGNPEPSEAD).

It belongs to the UPF0758 family.

This Xanthomonas campestris pv. campestris (strain 8004) protein is UPF0758 protein XC_3944.